We begin with the raw amino-acid sequence, 353 residues long: Thiamine thiazole synthase 1, chloroplastic (353 aa).

Residues 1-48 constitute a chloroplast transit peptide; that stretch reads MATLTSSICSKPKASVFDPHKSSFHGVPIATQARLSPVKSTPVNLAVT. Substrate is bound by residues A97, 117-118, G125, and A190; that span reads EQ. Position 219 is a 2,3-didehydroalanine (Cys) (C219). Residues D221, H236, M288, and 298 to 300 each bind substrate; that span reads RMG.

It belongs to the THI4 family. Homooctamer. Fe cation serves as cofactor. During the catalytic reaction, a sulfide is transferred from Cys-219 to a reaction intermediate, generating a dehydroalanine residue.

It is found in the plastid. The protein resides in the chloroplast. The catalysed reaction is [ADP-thiazole synthase]-L-cysteine + glycine + NAD(+) = [ADP-thiazole synthase]-dehydroalanine + ADP-5-ethyl-4-methylthiazole-2-carboxylate + nicotinamide + 3 H2O + 2 H(+). In terms of biological role, involved in biosynthesis of the thiamine precursor thiazole. Catalyzes the conversion of NAD and glycine to adenosine diphosphate 5-(2-hydroxyethyl)-4-methylthiazole-2-carboxylic acid (ADT), an adenylated thiazole intermediate. The reaction includes an iron-dependent sulfide transfer from a conserved cysteine residue of the protein to a thiazole intermediate. The enzyme can only undergo a single turnover, which suggests it is a suicide enzyme. May have additional roles in adaptation to various stress conditions and in DNA damage tolerance. This is Thiamine thiazole synthase 1, chloroplastic from Vitis vinifera (Grape).